Here is a 484-residue protein sequence, read N- to C-terminus: Pyruvate kinase (484 aa).

R33 contacts substrate. Positions 35, 37, 67, and 68 each coordinate K(+). ATP is bound at residue 35–38; the sequence is NFSH. R74 and K155 together coordinate ATP. Mg(2+) is bound at residue E221. G244, D245, and T277 together coordinate substrate. Mg(2+) is bound at residue D245.

This sequence belongs to the pyruvate kinase family. Homotetramer. It depends on Mg(2+) as a cofactor. The cofactor is K(+).

It carries out the reaction pyruvate + ATP = phosphoenolpyruvate + ADP + H(+). The protein operates within carbohydrate degradation; glycolysis; pyruvate from D-glyceraldehyde 3-phosphate: step 5/5. The polypeptide is Pyruvate kinase (pyk) (Chlamydia pneumoniae (Chlamydophila pneumoniae)).